Here is an 853-residue protein sequence, read N- to C-terminus: MKEPRIRGGLPLVWLWVLLAVAPGESLAKETAFVEVVLFESSPNGDYKTHTTELQGRFSRAGATISAEGEIVQMHPLGLCNNNDEEDLYEYGWVGVVKLEQPEMDPKPCLTVLGKAKRAVQRGATAVIFDVSDNPDAVEQLNQGLEDPLKRPVVYMKGMDAIKLMNIVNKQKGARARIQHRPPRQPTEYFDMGIFLAFFVVVSLVCLILLIKIKLKQRRSQNSMNRMAVQALEKMETRKFKAKGKVPREGSCGGLDTLSSSSTSDCAICLEKYIDGEELRVIPCTHRFHKRCVDPWLLQNHTCPHCRHNIIEQKKGGHGPVCVENSSNRGRQQQQQRVILPVHYPGRVQRTGPIAAYPTRTSMGPHGNPITVLTVERPLEPDLYPARTPTFLAGYRPVSLDHASSGHHCDLEHPPYPAPPAGHGFRRAKYSGRGFNNGTCYSQYETMYQHYYFQGLSYPHQQEVGGSQAPRVVENGHNHSFHSGNNMLYQPAPTLMHMAPPSSVGSCYLHSQHQHRSVCSGYLADVPCSDSSSSSSASSAQGHASSSDSMLDCTEASNQGVYGSCSTFRSSLSSDFDPYVYRSRSPARTGGGDAPGCGGEGGTGSGRGRVECRSHQTFPNSPSRDRLSSCSMEMNYSSNSSLERRGAVISSGTVPDASVSISQGGGKDRRGPEKGCTCCFQRQAGDPSSDCTNLYLGPDPHQTSGPSSSGGLYSVTSSILHRTDPGTVLGHPSRPCCLYEENHGSCYNEDYAVSIQYALAEAAAAAAAAAVAGCEAGQPIPIIPEDPGYDGGLECVGHVSWEMEGEEEEEEVLYCQEGPCCALAEETRALCRSTGKEGAGSTTGQDCHPTDRD.

An N-terminal signal peptide occupies residues 1–28 (MKEPRIRGGLPLVWLWVLLAVAPGESLA). The Extracellular segment spans residues 29 to 192 (KETAFVEVVL…PRQPTEYFDM (164 aa)). The chain crosses the membrane as a helical span at residues 193–213 (GIFLAFFVVVSLVCLILLIKI). At 214-853 (KLKQRRSQNS…GQDCHPTDRD (640 aa)) the chain is on the cytoplasmic side. The RING-type; atypical zinc finger occupies 266–307 (CAICLEKYIDGEELRVIPCTHRFHKRCVDPWLLQNHTCPHCR). Disordered regions lie at residues 583 to 629 (SRSP…RLSS), 650 to 673 (SSGTVPDASVSISQGGGKDRRGPE), 685 to 713 (GDPSSDCTNLYLGPDPHQTSGPSSSGGLY), and 834 to 853 (TGKEGAGSTTGQDCHPTDRD). Gly residues predominate over residues 589–607 (TGGGDAPGCGGEGGTGSGR). The span at 615 to 629 (HQTFPNSPSRDRLSS) shows a compositional bias: polar residues.

This sequence belongs to the ZNRF3 family.

The protein localises to the cell membrane. It catalyses the reaction S-ubiquitinyl-[E2 ubiquitin-conjugating enzyme]-L-cysteine + [acceptor protein]-L-lysine = [E2 ubiquitin-conjugating enzyme]-L-cysteine + N(6)-ubiquitinyl-[acceptor protein]-L-lysine.. The protein operates within protein modification; protein ubiquitination. E3 ubiquitin-protein ligase that acts as a negative regulator of the Wnt signaling pathway by mediating the ubiquitination and subsequent degradation of Wnt receptor complex components. Along with RSPO2 and RNF43, constitutes a master switch that governs limb specification. The polypeptide is E3 ubiquitin-protein ligase ZNRF3 (znrf3) (Xenopus tropicalis (Western clawed frog)).